A 149-amino-acid chain; its full sequence is NADH-ubiquinone oxidoreductase chain 6 (149 aa).

4 helical membrane-spanning segments follow: residues 23–43, 51–71, 83–103, and 114–134; these read ILMLSSLILLTLFLSLIFYFI, MMMILIILGGMLIIFMYMISL, LSVTFTMMLILIPYDSFMTKL, and VNFVNMIILMMIFLIVMLTII.

The protein belongs to the complex I subunit 6 family.

Its subcellular location is the mitochondrion membrane. It catalyses the reaction a ubiquinone + NADH + 5 H(+)(in) = a ubiquinol + NAD(+) + 4 H(+)(out). Core subunit of the mitochondrial membrane respiratory chain NADH dehydrogenase (Complex I) that is believed to belong to the minimal assembly required for catalysis. Complex I functions in the transfer of electrons from NADH to the respiratory chain. The immediate electron acceptor for the enzyme is believed to be ubiquinone. In Rhipicephalus sanguineus (Brown dog tick), this protein is NADH-ubiquinone oxidoreductase chain 6 (ND6).